Reading from the N-terminus, the 240-residue chain is Large ribosomal subunit protein uL3 (240 aa).

Disordered regions lie at residues 139 to 164 and 215 to 240; these read VSHR…KMPG and DAPK…QEGV. The residue at position 151 (glutamine 151) is an N5-methylglutamine. Positions 225–240 are enriched in low complexity; that stretch reads ADGGEQAAPAAEQEGV.

It belongs to the universal ribosomal protein uL3 family. As to quaternary structure, part of the 50S ribosomal subunit. Forms a cluster with proteins L14 and L19. Post-translationally, methylated by PrmB.

One of the primary rRNA binding proteins, it binds directly near the 3'-end of the 23S rRNA, where it nucleates assembly of the 50S subunit. The protein is Large ribosomal subunit protein uL3 of Rhodopseudomonas palustris (strain BisA53).